The following is a 435-amino-acid chain: 5-methylthioadenosine/S-adenosylhomocysteine deaminase (435 aa).

Residues His65 and His67 each contribute to the Zn(2+) site. Positions 94, 150, and 189 each coordinate substrate. Zn(2+) is bound at residue His216. 2 residues coordinate substrate: Glu219 and Asp304. Asp304 contributes to the Zn(2+) binding site.

It belongs to the metallo-dependent hydrolases superfamily. MTA/SAH deaminase family. Zn(2+) is required as a cofactor.

The enzyme catalyses S-adenosyl-L-homocysteine + H2O + H(+) = S-inosyl-L-homocysteine + NH4(+). The catalysed reaction is S-methyl-5'-thioadenosine + H2O + H(+) = S-methyl-5'-thioinosine + NH4(+). Functionally, catalyzes the deamination of 5-methylthioadenosine and S-adenosyl-L-homocysteine into 5-methylthioinosine and S-inosyl-L-homocysteine, respectively. Is also able to deaminate adenosine. This is 5-methylthioadenosine/S-adenosylhomocysteine deaminase from Bacillus cereus (strain ATCC 10987 / NRS 248).